The following is a 353-amino-acid chain: Guanine nucleotide-binding protein subunit alpha (353 aa).

Residues 1 to 25 (MGCGMSTEDKEGKARNEEIENQLKR) form a disordered region. Gly-2 carries N-myristoyl glycine lipidation. Cys-3 carries the S-palmitoyl cysteine lipid modification. A compositionally biased stretch (basic and acidic residues) spans 7-25 (TEDKEGKARNEEIENQLKR). Residues 32–353 (NEIKMLLLGA…QENLRLCGLI (322 aa)) form the G-alpha domain. The segment at 35 to 48 (KMLLLGAGESGKST) is G1 motif. GTP is bound by residues Glu-43, Ser-44, Gly-45, Lys-46, Ser-47, Thr-48, Asp-150, Leu-175, Thr-181, Gly-203, Asn-269, Lys-270, Asp-272, and Ala-325. Ser-47 provides a ligand contact to Mg(2+). The segment at 173–181 (DVLRSRVKT) is G2 motif. Thr-181 contacts Mg(2+). Residues 196–205 (YRMFDVGGQR) are G3 motif. The interval 265-272 (ILFLNKID) is G4 motif. Residues 323 to 328 (TCATDT) are G5 motif.

This sequence belongs to the G-alpha family. G(q) subfamily. In terms of assembly, g proteins are composed of 3 units; alpha, beta and gamma. The alpha chain contains the guanine nucleotide binding site. The cofactor is Mg(2+).

Functionally, guanine nucleotide-binding proteins (G proteins) are involved as modulators or transducers in various transmembrane signaling systems. This chain is Guanine nucleotide-binding protein subunit alpha (fadA), found in Emericella nidulans (strain FGSC A4 / ATCC 38163 / CBS 112.46 / NRRL 194 / M139) (Aspergillus nidulans).